Consider the following 185-residue polypeptide: Ribosome-recycling factor (185 aa).

The protein belongs to the RRF family.

It is found in the cytoplasm. Functionally, responsible for the release of ribosomes from messenger RNA at the termination of protein biosynthesis. May increase the efficiency of translation by recycling ribosomes from one round of translation to another. This chain is Ribosome-recycling factor, found in Shouchella clausii (strain KSM-K16) (Alkalihalobacillus clausii).